The following is a 401-amino-acid chain: Acetylornithine aminotransferase (401 aa).

Pyridoxal 5'-phosphate-binding positions include 121–122 (GA) and phenylalanine 154. Position 157 (arginine 157) interacts with N(2)-acetyl-L-ornithine. 239 to 242 (DEVQ) serves as a coordination point for pyridoxal 5'-phosphate. At lysine 268 the chain carries N6-(pyridoxal phosphate)lysine. Serine 296 lines the N(2)-acetyl-L-ornithine pocket. Threonine 297 contacts pyridoxal 5'-phosphate.

Belongs to the class-III pyridoxal-phosphate-dependent aminotransferase family. ArgD subfamily. As to quaternary structure, homodimer. Pyridoxal 5'-phosphate is required as a cofactor.

The protein resides in the cytoplasm. The enzyme catalyses N(2)-acetyl-L-ornithine + 2-oxoglutarate = N-acetyl-L-glutamate 5-semialdehyde + L-glutamate. It participates in amino-acid biosynthesis; L-arginine biosynthesis; N(2)-acetyl-L-ornithine from L-glutamate: step 4/4. The polypeptide is Acetylornithine aminotransferase (Myxococcus xanthus).